Consider the following 62-residue polypeptide: MHFSGVAFILISMVLIGSIFETTVEAGEGPKSDCKPDLCEAACKDLGKPMDFCKDGTCKCKD.

An N-terminal signal peptide occupies residues 1–26 (MHFSGVAFILISMVLIGSIFETTVEA). 3 disulfide bridges follow: Cys-34–Cys-53, Cys-39–Cys-58, and Cys-43–Cys-60.

The protein belongs to the short scorpion toxin superfamily. Potassium channel inhibitor family. Alpha-KTx 18 subfamily. In terms of tissue distribution, expressed by the venom gland.

The protein resides in the secreted. Probable voltage-gated potassium channel inhibitor. This Tityus discrepans (Venezuelan scorpion) protein is Potassium channel toxin alpha-KTx 18.3.